A 154-amino-acid polypeptide reads, in one-letter code: PTS system glucose-specific EIIA component (154 aa).

The 105-residue stretch at 26–130 (DEVFKERMLG…SIKSPIIFTN (105 aa)) folds into the PTS EIIA type-1 domain. Positions 63 and 78 each coordinate Zn(2+). Catalysis depends on His-78, which acts as the Tele-phosphohistidine intermediate; for EIIA activity. Phosphohistidine; by HPr is present on His-78.

Heterodimer with glycerol kinase (glpk). The cofactor is Zn(2+).

The protein localises to the cytoplasm. Its function is as follows. The phosphoenolpyruvate-dependent sugar phosphotransferase system (sugar PTS), a major carbohydrate active transport system, catalyzes the phosphorylation of incoming sugar substrates concomitantly with their translocation across the cell membrane. The enzyme II complex composed of PtsG and Crr is involved in glucose transport. The polypeptide is PTS system glucose-specific EIIA component (crr) (Mycoplasma capricolum subsp. capricolum (strain California kid / ATCC 27343 / NCTC 10154)).